Consider the following 218-residue polypeptide: Protein-L-isoaspartate O-methyltransferase 1 (218 aa).

The active site involves serine 69.

This sequence belongs to the methyltransferase superfamily. L-isoaspartyl/D-aspartyl protein methyltransferase family.

Its subcellular location is the cytoplasm. It carries out the reaction [protein]-L-isoaspartate + S-adenosyl-L-methionine = [protein]-L-isoaspartate alpha-methyl ester + S-adenosyl-L-homocysteine. In terms of biological role, catalyzes the methyl esterification of L-isoaspartyl residues in peptides and proteins that result from spontaneous decomposition of normal L-aspartyl and L-asparaginyl residues. It plays a role in the repair and/or degradation of damaged proteins. This Marinobacter nauticus (strain ATCC 700491 / DSM 11845 / VT8) (Marinobacter aquaeolei) protein is Protein-L-isoaspartate O-methyltransferase 1.